A 467-amino-acid chain; its full sequence is ATP synthase subunit beta (467 aa).

150-157 (GGAGVGKT) contacts ATP.

Belongs to the ATPase alpha/beta chains family. In terms of assembly, F-type ATPases have 2 components, CF(1) - the catalytic core - and CF(0) - the membrane proton channel. CF(1) has five subunits: alpha(3), beta(3), gamma(1), delta(1), epsilon(1). CF(0) has three main subunits: a(1), b(2) and c(9-12). The alpha and beta chains form an alternating ring which encloses part of the gamma chain. CF(1) is attached to CF(0) by a central stalk formed by the gamma and epsilon chains, while a peripheral stalk is formed by the delta and b chains.

Its subcellular location is the cell inner membrane. It catalyses the reaction ATP + H2O + 4 H(+)(in) = ADP + phosphate + 5 H(+)(out). Produces ATP from ADP in the presence of a proton gradient across the membrane. The catalytic sites are hosted primarily by the beta subunits. This chain is ATP synthase subunit beta, found in Aliivibrio salmonicida (strain LFI1238) (Vibrio salmonicida (strain LFI1238)).